A 944-amino-acid chain; its full sequence is UvrABC system protein A (944 aa).

33 to 40 (GLSGSGKS) serves as a coordination point for ATP. The segment at 252 to 279 (CPICGFSIGELEPRMFSFNSPFGACPTC) adopts a C4-type zinc-finger fold. 2 consecutive ABC transporter domains span residues 309–587 (WEPT…KKSL) and 607–935 (ITDR…QYLK). 639 to 646 (GVSGSGKS) is an ATP binding site. The segment at 738-764 (CEACKGDGIIKIEMHFLPDVYVPCEVC) adopts a C4-type zinc-finger fold.

It belongs to the ABC transporter superfamily. UvrA family. In terms of assembly, forms a heterotetramer with UvrB during the search for lesions.

It localises to the cytoplasm. Its function is as follows. The UvrABC repair system catalyzes the recognition and processing of DNA lesions. UvrA is an ATPase and a DNA-binding protein. A damage recognition complex composed of 2 UvrA and 2 UvrB subunits scans DNA for abnormalities. When the presence of a lesion has been verified by UvrB, the UvrA molecules dissociate. The protein is UvrABC system protein A of Staphylococcus epidermidis (strain ATCC 12228 / FDA PCI 1200).